The following is a 709-amino-acid chain: Ribosomal RNA large subunit methyltransferase K/L (709 aa).

In terms of domain architecture, THUMP spans 43 to 154 (LAYRITLWTR…NGVITIAMNF (112 aa)).

It belongs to the methyltransferase superfamily. RlmKL family.

The protein localises to the cytoplasm. It carries out the reaction guanosine(2445) in 23S rRNA + S-adenosyl-L-methionine = N(2)-methylguanosine(2445) in 23S rRNA + S-adenosyl-L-homocysteine + H(+). The catalysed reaction is guanosine(2069) in 23S rRNA + S-adenosyl-L-methionine = N(2)-methylguanosine(2069) in 23S rRNA + S-adenosyl-L-homocysteine + H(+). Specifically methylates the guanine in position 2445 (m2G2445) and the guanine in position 2069 (m7G2069) of 23S rRNA. The sequence is that of Ribosomal RNA large subunit methyltransferase K/L from Shewanella baltica (strain OS185).